Reading from the N-terminus, the 849-residue chain is Ribosome biogenesis protein ERB1 (849 aa).

The interval 1–130 is disordered; that stretch reads MARNSIKKSP…PKDDDLSRIN (130 aa). Composition is skewed to acidic residues over residues 29 to 44 and 51 to 123; these read EAEE…DELN and ASDD…EPKD. Residues 286–405 are required for interaction with NOP7; it reads RFVPSKHEAK…LRQVPGYQDS (120 aa). The tract at residues 405–441 is required for interaction with YTM1; the sequence is SVRERFERSLDLYLAPRVRHNKLNIDPDSLIPDLPSP. 2 WD repeats span residues 457 to 496 and 505 to 545; these read GHTG…QVYK and NNED…FDIE. A compositionally biased stretch (basic and acidic residues) spans 569-581; it reads KISSQKEEDNKES. The segment at 569–619 is disordered; sequence KISSQKEEDNKESDNEDEDEEEDNDDDDDDDEPETSSTVEPKKEVAKWYPP. Over residues 582–602 the composition is skewed to acidic residues; sequence DNEDEDEEEDNDDDDDDDEPE. WD repeat units lie at residues 633–675, 678–716, 719–758, 762–802, and 818–849; these read QCRK…SQSP, KSKG…LLKK, PGVR…TPYK, YHEK…DLMT, and INQI…LWTT.

This sequence belongs to the WD repeat BOP1/ERB1 family. In terms of assembly, component of the NOP7 complex, composed of ERB1, NOP7 and YTM1. The complex is held together by ERB1, which interacts with NOP7 via its N-terminal domain and with YTM1 via a high-affinity interaction between the seven-bladed beta-propeller domains of the 2 proteins. The NOP7 complex associates with the 66S pre-ribosome.

Its subcellular location is the nucleus. It is found in the nucleolus. The protein resides in the nucleoplasm. Its function is as follows. Component of the NOP7 complex, which is required for maturation of the 25S and 5.8S ribosomal RNAs and formation of the 60S ribosome. The polypeptide is Ribosome biogenesis protein ERB1 (Candida albicans (strain SC5314 / ATCC MYA-2876) (Yeast)).